Consider the following 271-residue polypeptide: Small ribosomal subunit protein uS2 (271 aa).

A compositionally biased stretch (basic and acidic residues) spans 229 to 242 (KERKGKDAEEELKK). Positions 229–271 (KERKGKDAEEELKKAAAPKAAPAAEAAPAAEAPAAPVVEAAAE) are disordered. The segment covering 243–271 (AAAPKAAPAAEAAPAAEAPAAPVVEAAAE) has biased composition (low complexity).

Belongs to the universal ribosomal protein uS2 family.

The sequence is that of Small ribosomal subunit protein uS2 from Nitratidesulfovibrio vulgaris (strain DSM 19637 / Miyazaki F) (Desulfovibrio vulgaris).